We begin with the raw amino-acid sequence, 90 residues long: MAYKMLQVVLCSTLLIGALGAPFLLEDPANQFLRLKRHVNLQDYWDPDHSSDVWVNTLAKQARETWIALKTTAQYYLDMNTFTFDMSTAQ.

An N-terminal signal peptide occupies residues 1 to 20 (MAYKMLQVVLCSTLLIGALG).

This is an uncharacterized protein from Homo sapiens (Human).